A 330-amino-acid chain; its full sequence is Membrane-associated protein VIPP1, chloroplastic (330 aa).

The N-terminal 64 residues, 1–64, are a transit peptide targeting the chloroplast; sequence MALKASPVTG…LRLACDNRLR (64 aa). 2 coiled-coil regions span residues 124–259 and 312–329; these read SQKQ…LTQI and KDSE…KAND. Positions 287-312 are disordered; sequence LSGSSKKGELPPGRSTVAASTRYPFK.

This sequence belongs to the PspA/Vipp/IM30 family. In terms of assembly, homomultimer. Complex formation involves interaction via the central alpha-helical domain (71-286).

It localises to the plastid. Its subcellular location is the chloroplast inner membrane. The protein resides in the chloroplast thylakoid membrane. Functionally, required for plastid vesicle formation and thylakoid membrane biogenesis, but not for functional assembly of thylakoid protein complexes. This is Membrane-associated protein VIPP1, chloroplastic from Arabidopsis thaliana (Mouse-ear cress).